A 393-amino-acid chain; its full sequence is MTNSNRIKLTWISFLSYALTGALVIVTGMVMGNIADYFHLPVSSMSNTFTFLNAGILISIFLNAWLMEIVPLKTQLRFGFILMVLAVAGLMFSHSLALFSAAMFVLGLVSGITMSIGTFLITQLYEGRQRGSRLLFTDSFFSMAGMIFPMVAAFLLARSIEWYWVYACIGLVYLAIFILTFGCEFPALGKHAQHSQAPVAKEKWGIGVLFLAVAALCYILGQLGFISWVPEYAKGLGMSLNDAGALVSDFWMSYMFGMWAFSFILRFFDLQRILTVLAGMAAVLMYLFITGTQAHMPWFILTLGFFSSAIYTSIITLGSQQTKVASPKLVNFILTCGTIGTMLTFVVTGPIVAHSGPQAALLTANGLYAVVFVMCFALGFVSRHRQHSAPATH.

12 helical membrane-spanning segments follow: residues 11 to 31 (WISF…GMVM), 51 to 71 (FLNA…EIVP), 78 to 98 (FGFI…SLAL), 101 to 121 (AAMF…TFLI), 134 to 154 (LLFT…VAAF), 162 to 182 (WYWV…LTFG), 206 to 226 (IGVL…LGFI), 245 to 265 (ALVS…SFIL), 273 to 293 (ILTV…TGTQ), 298 to 318 (WFIL…ITLG), 332 to 352 (FILT…GPIV), and 361 to 381 (LLTA…LGFV).

This sequence belongs to the major facilitator superfamily. TsgA family.

It is found in the cell inner membrane. In Salmonella dublin (strain CT_02021853), this protein is Protein TsgA.